The sequence spans 518 residues: Membrane-bound glycerophospholipid O-acyltransferase 2 (518 aa).

The next 6 helical transmembrane spans lie at 21–41 (PVDQVNFVVCQLFALLAAIWF), 60–80 (TLLGLYLALFCFGWYALHFVI), 87–107 (YLMIIIGVENMHKYCFVFALG), 183–203 (FMGILAGPLCSYKDYITFIEG), 230–250 (IAVAQKLLICGLSLLFHMTIT), and 267–283 (ASWPVRVFYLYLSLMAA). Active-site residues include Asn-341 and His-372. The next 3 membrane-spanning stretches (helical) occupy residues 365–385 (FILSAIWHGVYPGYYLTFLTG), 415–435 (IITWMTTQVAISYTVVPFVLL), and 443–463 (FYSSCYFCLHIASILVLLVFP).

It belongs to the membrane-bound acyltransferase family.

Its subcellular location is the endoplasmic reticulum membrane. The catalysed reaction is a 1-acyl-sn-glycero-3-phosphocholine + an acyl-CoA = a 1,2-diacyl-sn-glycero-3-phosphocholine + CoA. The enzyme catalyses a 1-acyl-sn-glycero-3-phosphoethanolamine + an acyl-CoA = a 1,2-diacyl-sn-glycero-3-phosphoethanolamine + CoA. It carries out the reaction a 1-acyl-sn-glycero-3-phosphate + an acyl-CoA = a 1,2-diacyl-sn-glycero-3-phosphate + CoA. It catalyses the reaction (9Z)-hexadecenoyl-CoA + 1-hexadecanoyl-sn-glycero-3-phosphocholine = 1-hexadecanoyl-2-(9Z-hexadecenoyl)-sn-glycero-3-phosphocholine + CoA. The catalysed reaction is 1-hexadecanoyl-sn-glycero-3-phosphoethanolamine + (9Z)-octadecenoyl-CoA = 1-hexadecanoyl-2-(9Z-octadecenoyl)-sn-glycero-3-phosphoethanolamine + CoA. The enzyme catalyses 1-hexadecanoyl-sn-glycero-3-phosphoethanolamine + (9Z)-hexadecenoyl-CoA = 1-hexadecanoyl-2-(9Z)-hexadecenoyl-sn-glycero-3-phosphoethanolamine + CoA. It carries out the reaction 1-(9Z-octadecenoyl)-sn-glycero-3-phospho-L-serine + hexadecanoyl-CoA = 1-(9Z)-octadecenoyl-2-hexadecanoyl-sn-glycero-3-phosphoserine + CoA. It catalyses the reaction (9Z,12Z)-octadecadienoyl-CoA + 1-hexadecanoyl-sn-glycero-3-phosphocholine = 1-hexadecanoyl-2-(9Z,12Z-octadecadienoyl)-sn-glycero-3-phosphocholine + CoA. The catalysed reaction is 1-hexadecanoyl-sn-glycero-3-phosphocholine + (9Z)-octadecenoyl-CoA = 1-hexadecanoyl-2-(9Z-octadecenoyl)-sn-glycero-3-phosphocholine + CoA. The enzyme catalyses 1-hexadecanoyl-sn-glycero-3-phosphate + (9Z)-hexadecenoyl-CoA = 1-hexadecanoyl-2-[(9Z)-hexadec-9-enoyl]-sn-glycero-3-phosphate + CoA. It carries out the reaction 1-hexadecanoyl-sn-glycero-3-phosphate + (9Z)-octadecenoyl-CoA = 1-hexadecanoyl-2-(9Z-octadecenoyl)-sn-glycero-3-phosphate + CoA. It catalyses the reaction a 1-O-(1Z-alkenyl)-sn-glycero-3-phosphocholine + (9Z)-octadecenoyl-CoA = 1-O-(1Z)-alkenyl-2-(9Z)-octadecenoyl-sn-glycero-3-phosphocholine + CoA. The catalysed reaction is a 1-O-(1Z-alkenyl)-sn-glycero-3-phosphoethanolamine + (9Z)-octadecenoyl-CoA = 1-O-(1Z)-alkenyl-2-(9Z)-octadecenoyl-sn-glycero-3-phosphoethanolamine + CoA. The enzyme catalyses 1-octadecanoyl-sn-glycero-3-phosphoethanolamine + (9Z)-octadecenoyl-CoA = 1-octadecanoyl-2-(9Z-octadecenoyl)-sn-glycero-3-phosphoethanolamine + CoA. It carries out the reaction 1-octadecanoyl-sn-glycero-3-phosphocholine + (9Z)-octadecenoyl-CoA = 1-octadecanoyl-2-(9Z-octadecenoyl)-sn-glycero-3-phosphocholine + CoA. It catalyses the reaction 1-(9Z-octadecenoyl)-sn-glycero-3-phosphoethanolamine + (9Z)-octadecenoyl-CoA = 1,2-di-(9Z-octadecenoyl)-sn-glycero-3-phosphoethanolamine + CoA. The protein operates within lipid metabolism; phospholipid metabolism. Its function is as follows. Acyltransferase which catalyzes the transfer of an acyl group from an acyl-CoA to a lysophospholipid leading to the production of a phospholipid and participates in the reacylation step of the phospholipid remodeling pathway also known as the Lands cycle. May catalyze preferentially the acylation of lysophosphatidylethanolamine (1-acyl-sn-glycero-3-phosphoethanolamine or LPE) and lysophosphatidic acid (LPA) and to a lesser extend lysophosphatidylcholine (LPC) and lysophosphatidylserine (LPS). Prefers oleoyl-CoA as the acyl donor. The polypeptide is Membrane-bound glycerophospholipid O-acyltransferase 2 (Gallus gallus (Chicken)).